A 266-amino-acid polypeptide reads, in one-letter code: Glucosamine-6-phosphate deaminase (266 aa).

The active-site Proton acceptor; for enolization step is Asp-72. Asp-141 acts as the For ring-opening step in catalysis. The active-site Proton acceptor; for ring-opening step is His-143. Glu-148 (for ring-opening step) is an active-site residue.

The protein belongs to the glucosamine/galactosamine-6-phosphate isomerase family. NagB subfamily. In terms of assembly, homohexamer.

The enzyme catalyses alpha-D-glucosamine 6-phosphate + H2O = beta-D-fructose 6-phosphate + NH4(+). Its pathway is amino-sugar metabolism; N-acetylneuraminate degradation; D-fructose 6-phosphate from N-acetylneuraminate: step 5/5. Its activity is regulated as follows. Allosterically activated by N-acetylglucosamine 6-phosphate (GlcNAc6P). In terms of biological role, catalyzes the reversible isomerization-deamination of glucosamine 6-phosphate (GlcN6P) to form fructose 6-phosphate (Fru6P) and ammonium ion. The sequence is that of Glucosamine-6-phosphate deaminase from Salmonella arizonae (strain ATCC BAA-731 / CDC346-86 / RSK2980).